Reading from the N-terminus, the 248-residue chain is Putative insertion sequence ATP-binding protein y4uH (248 aa).

106 to 113 contributes to the ATP binding site; it reads GPTGIGKS.

This sequence belongs to the IS21/IS1162 putative ATP-binding protein family.

This chain is Putative insertion sequence ATP-binding protein y4uH, found in Sinorhizobium fredii (strain NBRC 101917 / NGR234).